Reading from the N-terminus, the 677-residue chain is UvrABC system protein B (677 aa).

A Helicase ATP-binding domain is found at 24-412 (EGVLEGVPAQ…EGIVVEQVIR (389 aa)). 37–44 (GVTGSGKT) lines the ATP pocket. Positions 90-113 (YYDYYQPEAYLPSSDTYIEKDLAI) match the Beta-hairpin motif. Positions 429–591 (QIDDLMEEIQ…ITPQQIKKAR (163 aa)) constitute a Helicase C-terminal domain. A UVR domain is found at 635–670 (EKSMERTRKLMQEAAKKLEFIEAAQYRDELLKMEDL).

It belongs to the UvrB family. As to quaternary structure, forms a heterotetramer with UvrA during the search for lesions. Interacts with UvrC in an incision complex.

Its subcellular location is the cytoplasm. Functionally, the UvrABC repair system catalyzes the recognition and processing of DNA lesions. A damage recognition complex composed of 2 UvrA and 2 UvrB subunits scans DNA for abnormalities. Upon binding of the UvrA(2)B(2) complex to a putative damaged site, the DNA wraps around one UvrB monomer. DNA wrap is dependent on ATP binding by UvrB and probably causes local melting of the DNA helix, facilitating insertion of UvrB beta-hairpin between the DNA strands. Then UvrB probes one DNA strand for the presence of a lesion. If a lesion is found the UvrA subunits dissociate and the UvrB-DNA preincision complex is formed. This complex is subsequently bound by UvrC and the second UvrB is released. If no lesion is found, the DNA wraps around the other UvrB subunit that will check the other stand for damage. This is UvrABC system protein B from Bacteroides fragilis (strain ATCC 25285 / DSM 2151 / CCUG 4856 / JCM 11019 / LMG 10263 / NCTC 9343 / Onslow / VPI 2553 / EN-2).